The sequence spans 187 residues: UPF0301 protein VC_0467 (187 aa).

It belongs to the UPF0301 (AlgH) family.

In Vibrio cholerae serotype O1 (strain ATCC 39315 / El Tor Inaba N16961), this protein is UPF0301 protein VC_0467.